The sequence spans 347 residues: Holliday junction branch migration complex subunit RuvB (347 aa).

Positions 1–185 (MSDDPTTPEL…FGFTAHLEFY (185 aa)) are large ATPase domain (RuvB-L). ATP is bound by residues Leu24, Arg25, Gly66, Lys69, Thr70, Thr71, 132–134 (EDF), Arg175, Tyr185, and Arg222. Thr70 contributes to the Mg(2+) binding site. Positions 186–255 (DEGELAQVLA…AVHAALELYD (70 aa)) are small ATPAse domain (RuvB-S). Positions 258–347 (ELGLDRLDRA…SQPPSLMDDL (90 aa)) are head domain (RuvB-H). Residues Arg313 and Arg318 each contribute to the DNA site.

The protein belongs to the RuvB family. As to quaternary structure, homohexamer. Forms an RuvA(8)-RuvB(12)-Holliday junction (HJ) complex. HJ DNA is sandwiched between 2 RuvA tetramers; dsDNA enters through RuvA and exits via RuvB. An RuvB hexamer assembles on each DNA strand where it exits the tetramer. Each RuvB hexamer is contacted by two RuvA subunits (via domain III) on 2 adjacent RuvB subunits; this complex drives branch migration. In the full resolvosome a probable DNA-RuvA(4)-RuvB(12)-RuvC(2) complex forms which resolves the HJ.

It is found in the cytoplasm. It carries out the reaction ATP + H2O = ADP + phosphate + H(+). In terms of biological role, the RuvA-RuvB-RuvC complex processes Holliday junction (HJ) DNA during genetic recombination and DNA repair, while the RuvA-RuvB complex plays an important role in the rescue of blocked DNA replication forks via replication fork reversal (RFR). RuvA specifically binds to HJ cruciform DNA, conferring on it an open structure. The RuvB hexamer acts as an ATP-dependent pump, pulling dsDNA into and through the RuvAB complex. RuvB forms 2 homohexamers on either side of HJ DNA bound by 1 or 2 RuvA tetramers; 4 subunits per hexamer contact DNA at a time. Coordinated motions by a converter formed by DNA-disengaged RuvB subunits stimulates ATP hydrolysis and nucleotide exchange. Immobilization of the converter enables RuvB to convert the ATP-contained energy into a lever motion, pulling 2 nucleotides of DNA out of the RuvA tetramer per ATP hydrolyzed, thus driving DNA branch migration. The RuvB motors rotate together with the DNA substrate, which together with the progressing nucleotide cycle form the mechanistic basis for DNA recombination by continuous HJ branch migration. Branch migration allows RuvC to scan DNA until it finds its consensus sequence, where it cleaves and resolves cruciform DNA. In Leifsonia xyli subsp. xyli (strain CTCB07), this protein is Holliday junction branch migration complex subunit RuvB.